An 868-amino-acid polypeptide reads, in one-letter code: Protein NIP100 (868 aa).

The 51-residue stretch at 34–84 folds into the CAP-Gly domain; it reads GETQFAKGIWYGIELDKPLGKNDGSANGIRYFDIDLKKANSNGGYYGLFCK. Coiled-coil stretches lie at residues 101–175, 207–375, and 645–776; these read LNGN…HLDN, LDQT…QEEL, and SLLS…QIKE.

As to quaternary structure, component of the dynactin complex composed of at least ARP1, JNM1, NIP100 and ARP10. Dynactin comprises a short rod of the ARP1 filament attached to ARP10 at its pointed-end and probably associated with the capping protein at its barbed-end. The rod is implicated in dynein cargo binding. A sidearm formed by NIP100 projects from the ARP1 filament and is implicated in motor binding.

It localises to the cytoplasm. It is found in the cytoskeleton. The protein localises to the spindle pole. Functionally, motor-binding component of the dynactin complex which assists cytoplasmic dynein by increasing its processivity and by regulation of its cargo binding. The dynactin complex is required for the spindle translocation late in anaphase and is involved in a cell wall synthesis checkpoint. The protein is Protein NIP100 (NIP100) of Saccharomyces cerevisiae (strain ATCC 204508 / S288c) (Baker's yeast).